We begin with the raw amino-acid sequence, 85 residues long: RNA-binding protein Hfq (85 aa).

Residues 9 to 68 (DPFLNELRKEKVPVSVFLVNGIKLHGIIDSFDQYVVMLKNSITQMVYKHAISTVVPSRMV) enclose the Sm domain.

It belongs to the Hfq family. Homohexamer.

RNA chaperone that binds small regulatory RNA (sRNAs) and mRNAs to facilitate mRNA translational regulation in response to envelope stress, environmental stress and changes in metabolite concentrations. Also binds with high specificity to tRNAs. The sequence is that of RNA-binding protein Hfq from Legionella pneumophila (strain Paris).